Here is a 100-residue protein sequence, read N- to C-terminus: Biogenesis of lysosome-related organelles complex 1 subunit CNL1 (100 aa).

Residues 25–46 (SDRVKSLELEATRLVQRQNELV) are a coiled coil.

This sequence belongs to the BLOC1S4 family. In terms of assembly, component of the biogenesis of lysosome-related organelles complex-1 (BLOC-1).

It is found in the cytoplasm. Its function is as follows. Component of the biogenesis of lysosome-related organelles complex-1 (BLOC-1), a complex that is involved in endosomal cargo sorting. The sequence is that of Biogenesis of lysosome-related organelles complex 1 subunit CNL1 (CLN1) from Candida glabrata (strain ATCC 2001 / BCRC 20586 / JCM 3761 / NBRC 0622 / NRRL Y-65 / CBS 138) (Yeast).